The primary structure comprises 376 residues: MSGTTISSDRPNICAICHQKAFGYNYEVVSCNACKMFFRRAHAEKIDDFCKKGGKCFDGDDLLTSRPKCRSCRYKKCVNLGMRYHNSSESQTQSDEEPSPKQSVVAVVPQHIITQAHIDSTFFQHLHALNETRYNAYCVINICEDPSFCDLVAQGSKLSVYLRPQEIEWENTERKLKPWGSLGVLLAVEVCKGLSFYNDLLLSDRVLLLKNVAFKSHHLSVAYDSFIQKKGRVLAPTGTEMFPDVLFEIPKCREIIMDLLTSPMKPLMELQITESEYLLLNMIVICNPAIQGMSPSGQDLLSRHQQVYARILLQMCMVSNPRTGPGRYAAILAINQRLDRQSVITNRVVQCLREYWAPNFFFSKILTEACRSDVYY.

The nuclear receptor DNA-binding region spans 11–89 (PNICAICHQK…LGMRYHNSSE (79 aa)). 2 NR C4-type zinc fingers span residues 14–34 (CAIC…CNAC) and 50–72 (CKKG…CRSC). One can recognise an NR LBD domain in the interval 125–371 (HLHALNETRY…FSKILTEACR (247 aa)).

This sequence belongs to the nuclear hormone receptor family.

It is found in the nucleus. Orphan nuclear receptor. The chain is Nuclear hormone receptor family member nhr-124 (nhr-124) from Caenorhabditis elegans.